Reading from the N-terminus, the 307-residue chain is Nucleotide-binding protein Arth_2083 (307 aa).

30–37 is a binding site for ATP; that stretch reads GMSGAGRS. 81-84 lines the GTP pocket; sequence DVRS.

This sequence belongs to the RapZ-like family.

Its function is as follows. Displays ATPase and GTPase activities. The protein is Nucleotide-binding protein Arth_2083 of Arthrobacter sp. (strain FB24).